Consider the following 206-residue polypeptide: SOSS complex subunit B2 (206 aa).

Positions 26–89 (IVLEIGRVTK…SMWKGCLTLY (64 aa)) form a DNA-binding region, OB. Disordered regions lie at residues 114–146 (EPNP…GTGT) and 166–206 (SYAG…AFKR). Residues 181 to 196 (LPGTANNQTVMTTISN) are compositionally biased toward polar residues.

Belongs to the SOSS-B family. SOSS-B2 subfamily. Component of the SOSS complex, composed of SOSS-B (SOSS-B1/NABP2 or SOSS-B2/NABP1), SOSS-A/INTS3 and SOSS-C/INIP. SOSS complexes containing SOSS-B1/NABP2 are more abundant than complexes containing SOSS-B2/NABP1.

It is found in the nucleus. In terms of biological role, component of the SOSS complex, a multiprotein complex that functions downstream of the MRN complex to promote DNA repair and G2/M checkpoint. In the SOSS complex, acts as a sensor of single-stranded DNA that binds to single-stranded DNA, in particular to polypyrimidines. The SOSS complex associates with DNA lesions and influences diverse endpoints in the cellular DNA damage response including cell-cycle checkpoint activation, recombinational repair and maintenance of genomic stability. Required for efficient homologous recombination-dependent repair of double-strand breaks (DSBs) and ATM-dependent signaling pathways. The polypeptide is SOSS complex subunit B2 (NABP1) (Bos taurus (Bovine)).